Reading from the N-terminus, the 253-residue chain is uncharacterized protein (253 aa).

Isoleucine 17, serine 36, aspartate 62, asparagine 89, tyrosine 158, lysine 162, valine 191, and threonine 193 together coordinate NADP(+). Tyrosine 158 acts as the Proton donor in catalysis. The active-site Lowers pKa of active site Tyr is the lysine 162.

Belongs to the short-chain dehydrogenases/reductases (SDR) family.

Its subcellular location is the cytoplasm. The protein localises to the nucleus. This is an uncharacterized protein from Schizosaccharomyces pombe (strain 972 / ATCC 24843) (Fission yeast).